A 1006-amino-acid chain; its full sequence is E3 ubiquitin-protein ligase MIB1 (1006 aa).

The MIB/HERC2 1 domain occupies Asn-6–Ala-74. Residues His-80–Ser-132 form a ZZ-type zinc finger. Cys-85, Cys-88, Cys-100, Cys-103, Cys-109, Cys-112, His-118, and His-122 together coordinate Zn(2+). An MIB/HERC2 2 domain is found at Ser-143–Ala-221. Ser-408 is subject to Phosphoserine. ANK repeat units lie at residues Asp-430–Gly-460, Ala-463–Ala-492, Asp-496–Ala-525, Arg-529–Leu-558, Glu-562–Ile-591, Asn-595–Glu-627, Asp-631–Ile-661, Asn-665–Ile-694, and Asp-698–Ala-729. RING-type zinc fingers lie at residues Cys-819–Lys-854 and Cys-866–Arg-901. Residues Gln-935–Met-962 adopt a coiled-coil conformation. The segment at Cys-963–Arg-996 adopts an RING-type 3 zinc-finger fold.

As to quaternary structure, interacts with CEP131 and PCM1. Ubiquitinated; possibly via autoubiquitination. Ubiquitinated; this modification is inhibited in response to cellular stress, such as ultraviolet light (UV) radiation or heat shock. Widely expressed at low level. Expressed at higher level in spinal cord, ovary, whole brain, and all specific brain regions examined.

It is found in the cytoplasm. Its subcellular location is the cytoskeleton. The protein localises to the microtubule organizing center. It localises to the centrosome. The protein resides in the centriolar satellite. It is found in the cell membrane. It carries out the reaction S-ubiquitinyl-[E2 ubiquitin-conjugating enzyme]-L-cysteine + [acceptor protein]-L-lysine = [E2 ubiquitin-conjugating enzyme]-L-cysteine + N(6)-ubiquitinyl-[acceptor protein]-L-lysine.. It participates in protein modification; protein ubiquitination. Its function is as follows. E3 ubiquitin-protein ligase that mediates ubiquitination of Delta receptors, which act as ligands of Notch proteins. Positively regulates the Delta-mediated Notch signaling by ubiquitinating the intracellular domain of Delta, leading to endocytosis of Delta receptors. Probably mediates ubiquitination and subsequent proteasomal degradation of DAPK1, thereby antagonizing anti-apoptotic effects of DAPK1 to promote TNF-induced apoptosis. Involved in ubiquitination of centriolar satellite CEP131, CEP290 and PCM1 proteins and hence inhibits primary cilium formation in proliferating cells. Mediates 'Lys-63'-linked polyubiquitination of TBK1, which probably participates in kinase activation. Functionally, (Microbial infection) During adenovirus infection, mediates ubiquitination of Core-capsid bridging protein. This allows viral genome delivery into nucleus for infection. The sequence is that of E3 ubiquitin-protein ligase MIB1 (MIB1) from Homo sapiens (Human).